Reading from the N-terminus, the 316-residue chain is UDP-N-acetylglucosamine transporter yea4 (316 aa).

At 1 to 3 the chain is on the cytoplasmic side; it reads MIA. Residues 4–24 traverse the membrane as a helical segment; that stretch reads SALSFIFGGCCSNAYALEALV. At 25 to 31 the chain is on the lumenal side; it reads REFPSSG. A helical transmembrane segment spans residues 32–52; sequence ILITFSQFILITIEGLIYFLL. Topologically, residues 53–67 are cytoplasmic; it reads NDVQSLKHPKVPRKR. A helical membrane pass occupies residues 68-88; that stretch reads WFVVVVMFFAINVLNNVALGF. The Lumenal portion of the chain corresponds to 89 to 120; it reads DISVPVHIILRSSGPLTTMAVGRILAGKRYSS. Residues 121 to 141 traverse the membrane as a helical segment; that stretch reads LQIGSVFILTIGVIIATLGNA. The Cytoplasmic portion of the chain corresponds to 142-153; it reads KDLHLHVESMTR. Residues 154-174 traverse the membrane as a helical segment; the sequence is FGIGFTILVITQILGAIMGLV. The Lumenal segment spans residues 175 to 187; the sequence is LENTYRIYGSDWR. The helical transmembrane segment at 188–208 threads the bilayer; sequence ESLFYTHALSLPFFLFLLRPI. The Cytoplasmic portion of the chain corresponds to 209 to 214; sequence RSQWND. Residues 215 to 235 form a helical membrane-spanning segment; sequence LFAIHTKGFLNLPSGVWYLCF. Residues 236-274 lie on the Lumenal side of the membrane; that stretch reads NTLAQYFCVRGVNALGAETSALTVSVVLNVRKFVSLCLS. A helical transmembrane segment spans residues 275 to 295; it reads LILFENEMGPAVKFGALLVFG. Over 296–316 the chain is Cytoplasmic; sequence SSAVYASARSKPKTNGLKKND.

This sequence belongs to the nucleotide-sugar transporter family. SLC35B subfamily.

It localises to the endoplasmic reticulum. Its subcellular location is the endoplasmic reticulum membrane. Its function is as follows. Sugar transporter that specifically mediates the transport of UDP-N-acetylglucosamine (UDP-GlcNAc) and is required for cell wall chitin synthesis. The chain is UDP-N-acetylglucosamine transporter yea4 (yea4) from Schizosaccharomyces pombe (strain 972 / ATCC 24843) (Fission yeast).